The chain runs to 149 residues: Nascent polypeptide-associated complex subunit beta-2 (149 aa).

An NAC-A/B domain is found at 38–103 (DKDNTKLQAE…PKENTLNGLY (66 aa)).

This sequence belongs to the NAC-beta family. As to quaternary structure, part of the nascent polypeptide-associated complex (NAC), consisting of EGD2 and either EGD1 or BTT1. NAC associates with ribosomes via EGD1 or BTT1.

The protein resides in the cytoplasm. Its subcellular location is the nucleus. Functionally, acts as a component of the nascent polypeptide-associated complex (NAC), which promotes mitochondrial protein import by enhancing productive ribosome interactions with the outer mitochondrial membrane. Also blocks the inappropriate interaction of ribosomes translating non-secretory nascent polypeptides with translocation sites in the membrane of the endoplasmic reticulum. BTT1 may act as a transcription factor that exert a negative effect on the expression of several genes that are transcribed by RNA polymerase II. In Saccharomyces cerevisiae (strain YJM789) (Baker's yeast), this protein is Nascent polypeptide-associated complex subunit beta-2 (BTT1).